The sequence spans 312 residues: Coiled-coil domain-containing protein 42 homolog (312 aa).

2 coiled-coil regions span residues 34–121 (RLLE…RLKE) and 172–233 (ATHQ…WESQ).

The protein belongs to the CFAP73 family.

This chain is Coiled-coil domain-containing protein 42 homolog, found in Nematostella vectensis (Starlet sea anemone).